Here is a 360-residue protein sequence, read N- to C-terminus: Phospho-N-acetylmuramoyl-pentapeptide-transferase (360 aa).

Helical transmembrane passes span 25 to 45, 73 to 93, 97 to 117, 132 to 152, 168 to 188, 199 to 219, 236 to 256, 263 to 283, 288 to 308, and 339 to 359; these read RAILGVLTALGLSMVLGPWVI, TMGGTLILFSIVTATLLWADL, YVLAVLFVTITFGLIGWVDDY, WKYFWQSACGFIVAIALFVTA, VAWQMGVLYVFVTYLMIVGFS, GLAIMPTVMVGSALGVIAYLV, SGELVVYCAALAGAGLGFLWF, VFMGDVGALALGAALGVIAVI, IVFFIMSGIFVMETVSVILQV, and IVRFWIITVILVLFGLATLKI.

Belongs to the glycosyltransferase 4 family. MraY subfamily. It depends on Mg(2+) as a cofactor.

The protein localises to the cell inner membrane. It catalyses the reaction UDP-N-acetyl-alpha-D-muramoyl-L-alanyl-gamma-D-glutamyl-meso-2,6-diaminopimeloyl-D-alanyl-D-alanine + di-trans,octa-cis-undecaprenyl phosphate = di-trans,octa-cis-undecaprenyl diphospho-N-acetyl-alpha-D-muramoyl-L-alanyl-D-glutamyl-meso-2,6-diaminopimeloyl-D-alanyl-D-alanine + UMP. It participates in cell wall biogenesis; peptidoglycan biosynthesis. In terms of biological role, catalyzes the initial step of the lipid cycle reactions in the biosynthesis of the cell wall peptidoglycan: transfers peptidoglycan precursor phospho-MurNAc-pentapeptide from UDP-MurNAc-pentapeptide onto the lipid carrier undecaprenyl phosphate, yielding undecaprenyl-pyrophosphoryl-MurNAc-pentapeptide, known as lipid I. This is Phospho-N-acetylmuramoyl-pentapeptide-transferase from Teredinibacter turnerae (strain ATCC 39867 / T7901).